Here is a 444-residue protein sequence, read N- to C-terminus: UDP-N-acetylglucosamine 1-carboxyvinyltransferase (444 aa).

A phosphoenolpyruvate-binding site is contributed by 22–23 (KN). Residue Arg-94 participates in UDP-N-acetyl-alpha-D-glucosamine binding. Asp-119 functions as the Proton donor in the catalytic mechanism. UDP-N-acetyl-alpha-D-glucosamine contacts are provided by Asp-309 and Val-331.

The protein belongs to the EPSP synthase family. MurA subfamily.

Its subcellular location is the cytoplasm. It catalyses the reaction phosphoenolpyruvate + UDP-N-acetyl-alpha-D-glucosamine = UDP-N-acetyl-3-O-(1-carboxyvinyl)-alpha-D-glucosamine + phosphate. Its pathway is cell wall biogenesis; peptidoglycan biosynthesis. Functionally, cell wall formation. Adds enolpyruvyl to UDP-N-acetylglucosamine. This is UDP-N-acetylglucosamine 1-carboxyvinyltransferase from Chlamydia trachomatis serovar A (strain ATCC VR-571B / DSM 19440 / HAR-13).